Here is a 427-residue protein sequence, read N- to C-terminus: Trigger factor (427 aa).

The region spanning 163–248 (GDTVVIDFVG…VHEVKAKEVP (86 aa)) is the PPIase FKBP-type domain.

This sequence belongs to the FKBP-type PPIase family. Tig subfamily.

The protein localises to the cytoplasm. It carries out the reaction [protein]-peptidylproline (omega=180) = [protein]-peptidylproline (omega=0). Functionally, involved in protein export. Acts as a chaperone by maintaining the newly synthesized protein in an open conformation. Functions as a peptidyl-prolyl cis-trans isomerase. The chain is Trigger factor from Streptococcus equi subsp. zooepidemicus (strain H70).